The primary structure comprises 501 residues: Cell division control protein 24 (501 aa).

As to quaternary structure, interacts with dna2, pcn1 and rfc1.

It is found in the nucleus. The protein resides in the cytoplasm. Its function is as follows. Has a role in the progression of DNA replication and in the maintenance of genomic integrity. Acts during S phase, after initiation, where it is essential for completion. The protein is Cell division control protein 24 (cdc24) of Schizosaccharomyces pombe (strain 972 / ATCC 24843) (Fission yeast).